Reading from the N-terminus, the 179-residue chain is Tegument protein UL55 homolog (179 aa).

This sequence belongs to the alphaherpesvirinae HHV-1 UL55 family.

The protein resides in the virion tegument. It is found in the host nucleus matrix. The protein is Tegument protein UL55 homolog of Homo sapiens (Human).